A 59-amino-acid polypeptide reads, in one-letter code: Small ribosomal subunit protein eS30 (59 aa).

Residues Lys-1–Arg-35 are disordered. Over residues Glu-23–Arg-35 the composition is skewed to basic residues. Position 51 is an N6-succinyllysine (Lys-51).

It belongs to the eukaryotic ribosomal protein eS30 family.

This Mus spicilegus (Steppe mouse) protein is Small ribosomal subunit protein eS30 (Fau).